A 307-amino-acid chain; its full sequence is Cytochrome c1 2, heme protein, mitochondrial (307 aa).

The transit peptide at 1 to 64 (MVGGGVIRQL…LLSFSTVASA (64 aa)) directs the protein to the mitochondrion. Residues 65-270 (DEAEHGLECP…EPEMEERKLM (206 aa)) are Mitochondrial intermembrane-facing. The Cytochrome c domain maps to 90–197 (ASIRRGHQVY…NGQNYVFALL (108 aa)). The heme c site is built by Cys103, Cys106, His107, and Met226. The chain crosses the membrane as a helical span at residues 271 to 288 (GFKWIFLLSLALLQAAYY). The Mitochondrial matrix portion of the chain corresponds to 289–307 (RRLKWSVLKSRKLVLDVVN).

The protein belongs to the cytochrome c family. Component of the ubiquinol-cytochrome c oxidoreductase (cytochrome b-c1 complex, complex III, CIII), a multisubunit enzyme composed of 10 subunits. The complex is composed of 3 respiratory subunits cytochrome b (MT-CYB), cytochrome c1 (CYC1-1 or CYC1-2) and Rieske protein (UCR1-1 or UCR1-2), 2 core protein subunits MPPalpha1 (or MPPalpha2) and MPPB, and 5 low-molecular weight protein subunits QCR7-1 (or QCR7-2), UCRQ-1 (or UCRQ-2), QCR9, UCRY and probably QCR6-1 (or QCR6-2). The complex exists as an obligatory dimer and forms supercomplexes (SCs) in the inner mitochondrial membrane with NADH-ubiquinone oxidoreductase (complex I, CI), resulting in different assemblies (supercomplexes SCI(1)III(2) and SCI(2)III(4)). Post-translationally, binds 1 heme c group covalently per subunit.

It localises to the mitochondrion inner membrane. Component of the ubiquinol-cytochrome c oxidoreductase, a multisubunit transmembrane complex that is part of the mitochondrial electron transport chain which drives oxidative phosphorylation. The respiratory chain contains 3 multisubunit complexes succinate dehydrogenase (complex II, CII), ubiquinol-cytochrome c oxidoreductase (cytochrome b-c1 complex, complex III, CIII) and cytochrome c oxidase (complex IV, CIV), that cooperate to transfer electrons derived from NADH and succinate to molecular oxygen, creating an electrochemical gradient over the inner membrane that drives transmembrane transport and the ATP synthase. The cytochrome b-c1 complex catalyzes electron transfer from ubiquinol to cytochrome c, linking this redox reaction to translocation of protons across the mitochondrial inner membrane, with protons being carried across the membrane as hydrogens on the quinol. In the process called Q cycle, 2 protons are consumed from the matrix, 4 protons are released into the intermembrane space and 2 electrons are passed to cytochrome c. Cytochrome c1 is a catalytic core subunit containing a c-type heme. It transfers electrons from the [2Fe-2S] iron-sulfur cluster of the Rieske protein to cytochrome c. This chain is Cytochrome c1 2, heme protein, mitochondrial (CYC1-2), found in Arabidopsis thaliana (Mouse-ear cress).